We begin with the raw amino-acid sequence, 199 residues long: Ribonuclease P protein subunit p25 (199 aa).

The segment covering 1-11 (MENFRKVRSEE) has biased composition (basic and acidic residues). 2 disordered regions span residues 1–31 (MENF…FADL) and 146–199 (PRQL…DRTA). Ser172 carries the post-translational modification Phosphoserine. The segment covering 190–199 (PEAENEDRTA) has biased composition (acidic residues).

It belongs to the histone-like Alba family. As to quaternary structure, component of nuclear RNase P and RNase MRP ribonucleoproteins. RNase P consists of a catalytic RNA moiety and 10 different protein chains; POP1, POP4, POP5, POP7, RPP14, RPP21, RPP25, RPP30, RPP38 and RPP40. Within the RNase P complex, POP1, POP7 and RPP25 form the 'finger' subcomplex, POP5, RPP14, RPP40 and homodimeric RPP30 form the 'palm' subcomplex, and RPP21, POP4 and RPP38 form the 'wrist' subcomplex. All subunits of the RNase P complex interact with the catalytic RNA. Several subunits of RNase P are also part of the RNase MRP complex. RNase MRP consists of a catalytic RNA moiety and about 8 protein subunits; POP1, POP7, RPP25, RPP30, RPP38, RPP40 and possibly also POP4 and POP5. POP7 forms a heterodimer with RPP25 that binds to the P3 stem loop of the catalytic RNA.

Its subcellular location is the nucleus. It localises to the nucleolus. Its function is as follows. Component of ribonuclease P, a ribonucleoprotein complex that generates mature tRNA molecules by cleaving their 5'-ends. Also a component of the MRP ribonuclease complex, which cleaves pre-rRNA sequences. This Mus musculus (Mouse) protein is Ribonuclease P protein subunit p25 (Rpp25).